A 578-amino-acid chain; its full sequence is MRYSEMFLPTEREIPSDAEVVSHQLMLRAGMIRKLSAGIYSYLPLGYRVLRKVEQIIREEMNRAGAQEVYLPMVQPAELWQESGRWEHYGKELLRFRDRHDREYCLGPTHEEVITDLVRHEIKTYRQLPKNLYQIQTKFRDEIRPRFGVMRGREFGMKDAYSFDADEEGAEISYQKMFEAYKRIFARCGLRFRPVEADSGTIGGSFSHEFMVMADSGEDGLVFCATCSYAANLEKAEVHPPEKMEISNDEMLLLTEVHTPNARTIDEVCAFLNVTPQEIVKTLIFNADGNPVAVLVRGDEEVNEIKVKNYLKCQELELAMDDMIQDVTGAPRGFAGAIGIKKARILADYSLLNMKNVVMGANKEDYHLRNVNEGRDFQISAFADLKVARETDSCPRCQGALKFARGIEVGHVFKLGTKYSKAMGASYLDKNGKEQIMIMGCYGIGTGRTVAACIEQNHDENGIVWPMPISPYQVIITPVNMNDKALAETAERLYESLAGKGAEVLLDDRDERAGVKFKDADLIGIPIRVTVGPKKLAEGKVEVRLRDTGETSDVQVDSVEKMILRVIEGKMSESYLIF.

This sequence belongs to the class-II aminoacyl-tRNA synthetase family. ProS type 1 subfamily. In terms of assembly, homodimer.

The protein localises to the cytoplasm. The catalysed reaction is tRNA(Pro) + L-proline + ATP = L-prolyl-tRNA(Pro) + AMP + diphosphate. Catalyzes the attachment of proline to tRNA(Pro) in a two-step reaction: proline is first activated by ATP to form Pro-AMP and then transferred to the acceptor end of tRNA(Pro). As ProRS can inadvertently accommodate and process non-cognate amino acids such as alanine and cysteine, to avoid such errors it has two additional distinct editing activities against alanine. One activity is designated as 'pretransfer' editing and involves the tRNA(Pro)-independent hydrolysis of activated Ala-AMP. The other activity is designated 'posttransfer' editing and involves deacylation of mischarged Ala-tRNA(Pro). The misacylated Cys-tRNA(Pro) is not edited by ProRS. This Syntrophus aciditrophicus (strain SB) protein is Proline--tRNA ligase.